The following is a 175-amino-acid chain: Large ribosomal subunit protein uL10 (175 aa).

The protein belongs to the universal ribosomal protein uL10 family. Part of the ribosomal stalk of the 50S ribosomal subunit. The N-terminus interacts with L11 and the large rRNA to form the base of the stalk. The C-terminus forms an elongated spine to which L12 dimers bind in a sequential fashion forming a multimeric L10(L12)X complex.

Functionally, forms part of the ribosomal stalk, playing a central role in the interaction of the ribosome with GTP-bound translation factors. This Cupriavidus taiwanensis (strain DSM 17343 / BCRC 17206 / CCUG 44338 / CIP 107171 / LMG 19424 / R1) (Ralstonia taiwanensis (strain LMG 19424)) protein is Large ribosomal subunit protein uL10.